The primary structure comprises 461 residues: MPREIITCQVGQCGNQIGMEFWKQLCMEHGINPEGILEDFAVNGEDRKDVFFYQADDEHYVPRAVLIDLEPRVINGIQKSAYSSLYNPENIYIAKHGGGAGNNWGRGYTDAEKVQDEILEMIDREADGSDSLEGFVLTHSIAGGTGSGFGSYLLERLNDHYPKKLIQTYSVFPIENDVVVQPYNCLLSIKRLTLNADCVVVLDNNALTSIAVDRLKILQPTFSQINSIVSTVMAASTTTLRYPGYMNNDMVGLIASLVPTPRCHFLMTGYTPLSLDQKFNSVRKTTVLDVMRRLLQTKNIMVTGAVKKGAYMSILNVIQGDVDPTQVHKSLQRIRERKLANFIPWGPASIQVALSKKSPYIDSGHKVSGLMLANHTGIRSIFKVLYDQYRTFRKRDAYMNIFKQTKIFEDNLDEFDSSDEVVKSLIDEYAAAEKMDYINWGNDDDDMQFDPREPPKFSNIQ.

142-148 (AGGTGSG) serves as a coordination point for GTP.

This sequence belongs to the tubulin family.

The protein resides in the cytoplasm. The protein localises to the cytoskeleton. Its subcellular location is the microtubule organizing center. It localises to the centrosome. Its function is as follows. Tubulin is the major constituent of microtubules. The gamma chain is found at microtubule organizing centers (MTOC) such as the spindle poles or the centrosome, suggesting that it is involved in the minus-end nucleation of microtubule assembly. The protein is Tubulin gamma-1 chain of Euplotoides octocarinatus (Freshwater ciliate).